A 647-amino-acid chain; its full sequence is Cartilage acidic protein 1 (647 aa).

The signal sequence occupies residues 1 to 30; it reads MMLPADFFVPVSKMMLLALLLSIIICCGGA. An FG-GAP 1; atypical repeat occupies 48–90; it reads DYDSNPTQLNYGVAITDVDNDGDFEVVVAGYNGPNLVLKYIKE. Residues 107–149 form an FG-GAP 2; atypical repeat; it reads YALRDRQGNAIGVAACDIDGDGREEIYFLNTNNAFSGIATYSD. One copy of the FG-GAP 3; atypical repeat lies at 285–335; the sequence is TGVDDVYQHGRGVALADFNRDGKVDIVYGNWNGPHRLFLQMNTNGKVRFRD. An FG-GAP 4; atypical repeat occupies 397 to 439; it reads GDASEPDGRGTGGAVTDFDGDGMLDLILSHGESMAQPLSVFKG. Positions 561–607 constitute an EGF-like domain; the sequence is DTDECIQFPFVCPREKPVCINTYGGYKCRPNRRCSRGFEPNEDGTAC. 3 cysteine pairs are disulfide-bonded: Cys565–Cys579, Cys572–Cys588, and Cys594–Cys607.

The protein resides in the secreted. It is found in the extracellular space. The protein localises to the extracellular matrix. This Xenopus tropicalis (Western clawed frog) protein is Cartilage acidic protein 1 (crtac1).